The chain runs to 147 residues: UPF0260 protein Ent638_2368 (147 aa).

This sequence belongs to the UPF0260 family.

The chain is UPF0260 protein Ent638_2368 from Enterobacter sp. (strain 638).